The primary structure comprises 703 residues: Fibulin-1 (703 aa).

An N-terminal signal peptide occupies residues 1–29 (MERAAPSRRVPLPLLLLGGLALLAAGVDA). Disulfide bonds link cysteine 36–cysteine 61, cysteine 37–cysteine 68, cysteine 50–cysteine 69, cysteine 78–cysteine 109, cysteine 91–cysteine 110, cysteine 112–cysteine 136, cysteine 113–cysteine 143, cysteine 126–cysteine 144, cysteine 180–cysteine 190, cysteine 186–cysteine 199, cysteine 201–cysteine 214, cysteine 220–cysteine 233, cysteine 227–cysteine 242, cysteine 248–cysteine 260, cysteine 266–cysteine 279, cysteine 273–cysteine 288, cysteine 294–cysteine 306, cysteine 312–cysteine 325, cysteine 319–cysteine 334, cysteine 341–cysteine 354, cysteine 360–cysteine 373, cysteine 367–cysteine 382, cysteine 384–cysteine 397, cysteine 403–cysteine 415, cysteine 411–cysteine 424, cysteine 426–cysteine 439, cysteine 445–cysteine 454, cysteine 450–cysteine 463, cysteine 465–cysteine 479, cysteine 485–cysteine 498, cysteine 494–cysteine 507, cysteine 509–cysteine 523, cysteine 529–cysteine 542, cysteine 536–cysteine 551, and cysteine 556–cysteine 577. Anaphylatoxin-like domains are found at residues 36–76 (CCAD…LEEL), 77–111 (HCAT…RCCH), and 112–144 (CCLL…QACC). N-linked (GlcNAc...) (complex) asparagine glycosylation occurs at asparagine 98. The 40-residue stretch at 176 to 215 (LNDRCRGGGPCKQQCRDTGDEVVCSCFVGYQLLSDGVSCE) folds into the EGF-like 1 domain. The 46-residue stretch at 216-261 (DVNECITGSHSCRLGESCINTVGSFRCQRDSSCGTGYELTEDNSCK) folds into the EGF-like 2; calcium-binding domain. Residues 262–307 (DIDECESGIHNCLPDFICQNTLGSFRCRPKLQCKSGFIQDALGNCI) form the EGF-like 3; calcium-binding domain. The 48-residue stretch at 308 to 355 (DINECLSISAPCPIGHTCINTEGSYTCQKNVPNCGRGYHLNEEGTRCV) folds into the EGF-like 4; calcium-binding domain. The EGF-like 5; calcium-binding domain occupies 356-398 (DVDECAPPAEPCGKGHRCVNSPGSFRCECKTGYYFDGISRMCV). The tract at residues 356 to 440 (DVDECAPPAE…RLSVDGRSCE (85 aa)) is self-association and FN1-binding; calcium is necessary for homotypic binding, but not for heterotypic binding. In terms of domain architecture, EGF-like 6; calcium-binding spans 399–440 (DVNECQRYPGRLCGHKCENTLGSYLCSCSVGFRLSVDGRSCE). The 40-residue stretch at 441–480 (DINECSSSPCSQECANVYGSYQCYCRRGYQLSDVDGVTCE) folds into the EGF-like 7; calcium-binding domain. Positions 481–524 (DIDECALPTGGHICSYRCINIPGSFQCSCPSSGYRLAPNGRNCQ) constitute an EGF-like 8; calcium-binding domain. Positions 525-578 (DIDECVTGIHNCSINETCFNIQGGFRCLAFECPENYRRSAATLQQEKTDTVRCI) constitute an EGF-like 9; calcium-binding domain. N-linked (GlcNAc...) asparagine glycosylation is found at asparagine 535 and asparagine 539.

Belongs to the fibulin family. In terms of assembly, homomultimerizes and interacts with various extracellular matrix components such as FN1, LAMA1, LAMA2, NID, ACAN, CSPG2 and type IV collagen. Also interacts with APP and FGB. Interacts with FBLN7. Interacts with CCN3. As to quaternary structure, (Microbial infection) Interacts with human papillomavirus/HPV type 16, 18 and 31 proteins E6. In terms of tissue distribution, isoform A and isoform B are only expressed in placenta. Isoform C and isoform D are expressed in a variety of tissues and cultured cells.

It is found in the secreted. The protein resides in the extracellular space. The protein localises to the extracellular matrix. In terms of biological role, incorporated into fibronectin-containing matrix fibers. May play a role in cell adhesion and migration along protein fibers within the extracellular matrix (ECM). Could be important for certain developmental processes and contribute to the supramolecular organization of ECM architecture, in particular to those of basement membranes. Has been implicated in a role in cellular transformation and tumor invasion, it appears to be a tumor suppressor. May play a role in haemostasis and thrombosis owing to its ability to bind fibrinogen and incorporate into clots. Could play a significant role in modulating the neurotrophic activities of APP, particularly soluble APP. The chain is Fibulin-1 (FBLN1) from Homo sapiens (Human).